The chain runs to 553 residues: Major facilitator-type transporter hxnZ (553 aa).

5 consecutive transmembrane segments (helical) span residues 89 to 109, 128 to 148, 152 to 172, 174 to 194, and 213 to 233; these read FTVAGFGWIVDNFCSQGISAV, VAYYVGMIIGASFWGISSDLI, PAFNSTLAIAGIFLCAAAGTS, FIAFSALWAVIGTAAGGNVVC, and ALSGWWNLGQLVVSLLAWVFL. Asn235 carries N-linked (GlcNAc...) asparagine glycosylation. 7 consecutive transmembrane segments (helical) span residues 257–277, 366–386, 409–429, 433–453, 459–481, 496–516, and 525–545; these read YTLITLGGLSLAFTFVRIFVF, ALIWAVWLIIGIAYPLYFNFL, IQSAVGVVGPLSAAVLVNTFL, WMMGISSIVTGVFLFAYVGVK, LAFSCVTGLLANFANQLSEYAIM, TASGTAASLLRFGGLVASLIA, and PIYASAALWVGVGVLCFGLPF.

It belongs to the major facilitator superfamily.

The protein localises to the cell membrane. Major facilitator-type transporter, part of the hnx cluster involved in the purine degradation. The nicotinate hydroxylase hnxS accepts nicotinate as a substrate and catalyzes the first step of nicotinate catabolism. The major facilitator-type transporters hxnP and hxnZ are probably involved in the uptake of nicotinate-derived metabolites, and the oxidoreductases hxnT and hxnY in the further metabolism of 6-OH nicotinic acid. The sequence is that of Major facilitator-type transporter hxnZ from Emericella nidulans (strain FGSC A4 / ATCC 38163 / CBS 112.46 / NRRL 194 / M139) (Aspergillus nidulans).